Reading from the N-terminus, the 373-residue chain is Cobalt-precorrin-5B C(1)-methyltransferase (373 aa).

It belongs to the CbiD family.

The catalysed reaction is Co-precorrin-5B + S-adenosyl-L-methionine = Co-precorrin-6A + S-adenosyl-L-homocysteine. Its pathway is cofactor biosynthesis; adenosylcobalamin biosynthesis; cob(II)yrinate a,c-diamide from sirohydrochlorin (anaerobic route): step 6/10. Functionally, catalyzes the methylation of C-1 in cobalt-precorrin-5B to form cobalt-precorrin-6A. This chain is Cobalt-precorrin-5B C(1)-methyltransferase, found in Listeria monocytogenes serotype 4a (strain HCC23).